The primary structure comprises 65 residues: Translational regulator CsrA (65 aa).

The protein belongs to the CsrA/RsmA family. Homodimer; the beta-strands of each monomer intercalate to form a hydrophobic core, while the alpha-helices form wings that extend away from the core.

Its subcellular location is the cytoplasm. A translational regulator that binds mRNA to regulate translation initiation and/or mRNA stability. Usually binds in the 5'-UTR at or near the Shine-Dalgarno sequence preventing ribosome-binding, thus repressing translation. Its main target seems to be the major flagellin gene, while its function is anatagonized by FliW. This is Translational regulator CsrA from Bordetella petrii (strain ATCC BAA-461 / DSM 12804 / CCUG 43448).